Here is a 104-residue protein sequence, read N- to C-terminus: Pyrimidine/purine nucleoside phosphorylase (104 aa).

This sequence belongs to the nucleoside phosphorylase PpnP family.

The catalysed reaction is a purine D-ribonucleoside + phosphate = a purine nucleobase + alpha-D-ribose 1-phosphate. The enzyme catalyses adenosine + phosphate = alpha-D-ribose 1-phosphate + adenine. It carries out the reaction cytidine + phosphate = cytosine + alpha-D-ribose 1-phosphate. It catalyses the reaction guanosine + phosphate = alpha-D-ribose 1-phosphate + guanine. The catalysed reaction is inosine + phosphate = alpha-D-ribose 1-phosphate + hypoxanthine. The enzyme catalyses thymidine + phosphate = 2-deoxy-alpha-D-ribose 1-phosphate + thymine. It carries out the reaction uridine + phosphate = alpha-D-ribose 1-phosphate + uracil. It catalyses the reaction xanthosine + phosphate = alpha-D-ribose 1-phosphate + xanthine. Catalyzes the phosphorolysis of diverse nucleosides, yielding D-ribose 1-phosphate and the respective free bases. Can use uridine, adenosine, guanosine, cytidine, thymidine, inosine and xanthosine as substrates. Also catalyzes the reverse reactions. This Colwellia psychrerythraea (strain 34H / ATCC BAA-681) (Vibrio psychroerythus) protein is Pyrimidine/purine nucleoside phosphorylase.